Here is a 340-residue protein sequence, read N- to C-terminus: Conidiation-specific protein 13 (340 aa).

Positions 313–340 (AEAAAGISSGKPAADRKTKGKKGTKFRV) are disordered. Residues 330 to 340 (TKGKKGTKFRV) show a composition bias toward basic residues.

In Neurospora crassa (strain ATCC 24698 / 74-OR23-1A / CBS 708.71 / DSM 1257 / FGSC 987), this protein is Conidiation-specific protein 13 (con-13).